The sequence spans 1940 residues: Rho GTPase-activating protein 32 (1940 aa).

Positions 154–248 constitute a PX; atypical domain; that stretch reads SKELVFLVQI…LTWMEIDNKG (95 aa). In terms of domain architecture, SH3 spans 262–324; the sequence is PAIAAAHVIK…PSECVELIND (63 aa). Positions 375 to 570 constitute a Rho-GAP domain; sequence CDLGEHLLNS…FILNHVEVLF (196 aa). Disordered stretches follow at residues 646–746, 1035–1163, 1219–1264, 1430–1454, and 1675–1786; these read FPSE…LSAS, RANQ…FSVT, FTTG…PPVR, KHPR…YTED, and RSRS…HSSA. The span at 1047–1061 shows a compositional bias: polar residues; it reads PQGASASESPQELSH. Low complexity-rich tracts occupy residues 1081–1094 and 1145–1163; these read LALA…QASA and SRKT…FSVT. Residues 1691-1707 show a composition bias toward basic and acidic residues; sequence ETKDVRYPGRTEGDERT. The segment covering 1725–1734 has biased composition (polar residues); the sequence is PQKQSGSSRS. A compositionally biased stretch (basic and acidic residues) spans 1736–1755; sequence MQHDISTEQHSQDTLHRQPS.

It belongs to the PX domain-containing GAP family.

The protein resides in the cytoplasm. It localises to the membrane. Its subcellular location is the cell membrane. In terms of biological role, GTPase-activating protein (GAP) promoting GTP hydrolysis on RHOA, CDC42 and RAC1 small GTPases. The polypeptide is Rho GTPase-activating protein 32 (arhgap32) (Xenopus laevis (African clawed frog)).